An 89-amino-acid polypeptide reads, in one-letter code: Small ribosomal subunit protein uS15 (89 aa).

The protein belongs to the universal ribosomal protein uS15 family. In terms of assembly, part of the 30S ribosomal subunit. Forms a bridge to the 50S subunit in the 70S ribosome, contacting the 23S rRNA.

Its function is as follows. One of the primary rRNA binding proteins, it binds directly to 16S rRNA where it helps nucleate assembly of the platform of the 30S subunit by binding and bridging several RNA helices of the 16S rRNA. Functionally, forms an intersubunit bridge (bridge B4) with the 23S rRNA of the 50S subunit in the ribosome. In Nocardia farcinica (strain IFM 10152), this protein is Small ribosomal subunit protein uS15.